The primary structure comprises 367 residues: Protein RIC-3 (367 aa).

A signal peptide spans 1-31 (MAYSTVQRVALASGLVLAVSLLLPKAFLSRG). The tract at residues 30 to 67 (RGKRPEPPPGPEGKLDRFPPMMHHHSAPSDGQTPGARF) is disordered. Residues 32–95 (KRPEPPPGPE…AGGGGSGRGL (64 aa)) lie on the Lumenal side of the membrane. The chain crosses the membrane as a helical span at residues 96-116 (MGQIIPIYGFGIFLYILYILF). The Cytoplasmic portion of the chain corresponds to 117–367 (KLSKGKTAED…LRKRNPQGFE (251 aa)). Residues 138-169 (HRKITNFELVQLQEKLKETEEAMEKLINRVGP) are a coiled coil. K201 carries the post-translational modification N6-acetyllysine; alternate. K201 is covalently cross-linked (Glycyl lysine isopeptide (Lys-Gly) (interchain with G-Cter in ubiquitin); alternate). 2 disordered regions span residues 262-301 (QMGE…PESC) and 322-367 (ADGY…QGFE). The span at 271–280 (SERLSWDHLP) shows a compositional bias: basic and acidic residues. Residues 358–367 (LRKRNPQGFE) show a composition bias toward basic residues.

This sequence belongs to the ric-3 family. As to quaternary structure, monomer and homodimer. Interacts with CHRNA7, CHRNA3, CHRNA4, CHRNB2, CHRNB4 and HTR3A. Expressed in brain, with highest levels in hippocampus, cerebellum and superior colliculus.

Its subcellular location is the endoplasmic reticulum membrane. Functionally, molecular chaperone which promotes the proper subunit assembly and surface trafficking of alpha-7 (CHRNA7) nicotinic acetylcholine receptor. Promotes the proper subunit assembly and cell surface expression of alpha-8 (CHRNA8) nicotinic acetylcholine receptor. May also promote functional expression of homomeric serotoninergic 5-HT3 receptors, and of heteromeric acetylcholine receptors alpha-3/beta-2, alpha-3/beta-4, alpha-4/beta-2 and alpha-4/beta-4. The polypeptide is Protein RIC-3 (Ric3) (Mus musculus (Mouse)).